An 81-amino-acid chain; its full sequence is ATP synthase subunit c, chloroplastic (81 aa).

Transmembrane regions (helical) follow at residues 3–23 (PLISAASVIAAGLSVGLASIG) and 57–77 (LAFMEALTIYGLVVALALLFA).

It belongs to the ATPase C chain family. In terms of assembly, F-type ATPases have 2 components, F(1) - the catalytic core - and F(0) - the membrane proton channel. F(1) has five subunits: alpha(3), beta(3), gamma(1), delta(1), epsilon(1). F(0) has four main subunits: a(1), b(1), b'(1) and c(10-14). The alpha and beta chains form an alternating ring which encloses part of the gamma chain. F(1) is attached to F(0) by a central stalk formed by the gamma and epsilon chains, while a peripheral stalk is formed by the delta, b and b' chains.

It localises to the plastid. The protein localises to the chloroplast thylakoid membrane. In terms of biological role, f(1)F(0) ATP synthase produces ATP from ADP in the presence of a proton or sodium gradient. F-type ATPases consist of two structural domains, F(1) containing the extramembraneous catalytic core and F(0) containing the membrane proton channel, linked together by a central stalk and a peripheral stalk. During catalysis, ATP synthesis in the catalytic domain of F(1) is coupled via a rotary mechanism of the central stalk subunits to proton translocation. Key component of the F(0) channel; it plays a direct role in translocation across the membrane. A homomeric c-ring of between 10-14 subunits forms the central stalk rotor element with the F(1) delta and epsilon subunits. The polypeptide is ATP synthase subunit c, chloroplastic (Pinus koraiensis (Korean pine)).